The primary structure comprises 300 residues: F-box/LRR-repeat protein 15 (300 aa).

An N-acetylmethionine modification is found at Met1. The F-box domain maps to 19-66 (FLDLPWEDVLLPHVLNRVPLRQLLRLQRVSRAFRSLVQLHLAGLRRFD). Residues 113-269 (NPQLRSVALG…ESSLSRLRKR (157 aa)) form an interaction with SMURF1 region. LRR repeat units follow at residues 141 to 162 (RLQR…RGLA), 167 to 188 (ALEE…VYLA), 194 to 215 (GLRS…QELA), 220 to 241 (ELHH…RTLA), and 246 to 267 (VLRS…SRLR).

Belongs to the FBXL15 family. Part of the SCF (SKP1-CUL1-F-box) E3 ubiquitin-protein ligase complex SCF(FBXL15) composed of CUL1, SKP1, RBX1 and FBXL15.

It localises to the cytoplasm. The protein operates within protein modification; protein ubiquitination. Its function is as follows. Substrate recognition component of a SCF (SKP1-CUL1-F-box protein) E3 ubiquitin-protein ligase complex which mediates the ubiquitination and subsequent proteasomal degradation of SMURF1, thereby acting as a positive regulator of the BMP signaling pathway. Required for dorsal/ventral pattern formation and bone mass maintenance. Also mediates ubiquitination of SMURF2 and WWP2. This is F-box/LRR-repeat protein 15 (FBXL15) from Homo sapiens (Human).